The primary structure comprises 94 residues: Large ribosomal subunit protein uL29 (94 aa).

The disordered stretch occupies residues 65-94 (ANPGERKSRVFSRAKRKKKNLARLSAKAKG). Over residues 73–94 (RVFSRAKRKKKNLARLSAKAKG) the composition is skewed to basic residues.

Belongs to the universal ribosomal protein uL29 family.

The sequence is that of Large ribosomal subunit protein uL29 from Leptospira interrogans serogroup Icterohaemorrhagiae serovar copenhageni (strain Fiocruz L1-130).